The following is a 297-amino-acid chain: Ribosomal protein L11 methyltransferase (297 aa).

Residues threonine 152, glycine 173, aspartate 195, and asparagine 234 each coordinate S-adenosyl-L-methionine.

This sequence belongs to the methyltransferase superfamily. PrmA family.

It is found in the cytoplasm. The enzyme catalyses L-lysyl-[protein] + 3 S-adenosyl-L-methionine = N(6),N(6),N(6)-trimethyl-L-lysyl-[protein] + 3 S-adenosyl-L-homocysteine + 3 H(+). Methylates ribosomal protein L11. The chain is Ribosomal protein L11 methyltransferase from Cupriavidus pinatubonensis (strain JMP 134 / LMG 1197) (Cupriavidus necator (strain JMP 134)).